Consider the following 414-residue polypeptide: Histidine--tRNA ligase (414 aa).

This sequence belongs to the class-II aminoacyl-tRNA synthetase family. Homodimer.

The protein localises to the cytoplasm. It carries out the reaction tRNA(His) + L-histidine + ATP = L-histidyl-tRNA(His) + AMP + diphosphate + H(+). In Endomicrobium trichonymphae, this protein is Histidine--tRNA ligase.